We begin with the raw amino-acid sequence, 785 residues long: Endonuclease MutS2 (785 aa).

334–341 (GPNTGGKT) lines the ATP pocket. The 76-residue stretch at 710-785 (LDLRGQRYDE…GNGATIVKLK (76 aa)) folds into the Smr domain.

It belongs to the DNA mismatch repair MutS family. MutS2 subfamily. In terms of assembly, homodimer. Binds to stalled ribosomes, contacting rRNA.

Its function is as follows. Endonuclease that is involved in the suppression of homologous recombination and thus may have a key role in the control of bacterial genetic diversity. Functionally, acts as a ribosome collision sensor, splitting the ribosome into its 2 subunits. Detects stalled/collided 70S ribosomes which it binds and splits by an ATP-hydrolysis driven conformational change. Acts upstream of the ribosome quality control system (RQC), a ribosome-associated complex that mediates the extraction of incompletely synthesized nascent chains from stalled ribosomes and their subsequent degradation. Probably generates substrates for RQC. The polypeptide is Endonuclease MutS2 (Lactobacillus helveticus (strain DPC 4571)).